The sequence spans 315 residues: Glycine--tRNA ligase alpha subunit (315 aa).

The protein belongs to the class-II aminoacyl-tRNA synthetase family. In terms of assembly, tetramer of two alpha and two beta subunits.

It localises to the cytoplasm. It catalyses the reaction tRNA(Gly) + glycine + ATP = glycyl-tRNA(Gly) + AMP + diphosphate. The protein is Glycine--tRNA ligase alpha subunit of Pseudomonas syringae pv. tomato (strain ATCC BAA-871 / DC3000).